The following is a 464-amino-acid chain: Cell division protein FtsA (464 aa).

A disordered region spans residues 392-464; the sequence is EVIETDKDTE…FKKLMKSLFE (73 aa). The segment covering 416–455 has biased composition (basic and acidic residues); sequence KKENDEVAPEAPREESYEDRENHLEDEQQTEGKAKEESKF.

This sequence belongs to the FtsA/MreB family. As to quaternary structure, self-interacts. Interacts with FtsZ.

Its subcellular location is the cell membrane. Its function is as follows. Cell division protein that is involved in the assembly of the Z ring. May serve as a membrane anchor for the Z ring. The sequence is that of Cell division protein FtsA from Staphylococcus epidermidis (strain ATCC 12228 / FDA PCI 1200).